Consider the following 351-residue polypeptide: Protein RecA (351 aa).

68-75 (GPESSGKT) contacts ATP.

The protein belongs to the RecA family.

It is found in the cytoplasm. Can catalyze the hydrolysis of ATP in the presence of single-stranded DNA, the ATP-dependent uptake of single-stranded DNA by duplex DNA, and the ATP-dependent hybridization of homologous single-stranded DNAs. It interacts with LexA causing its activation and leading to its autocatalytic cleavage. The sequence is that of Protein RecA from Chloroflexus aggregans (strain MD-66 / DSM 9485).